A 498-amino-acid polypeptide reads, in one-letter code: ATP synthase subunit beta, chloroplastic (498 aa).

Threonine 6 is modified (phosphothreonine). A Phosphoserine modification is found at serine 13. 172 to 179 is a binding site for ATP; that stretch reads GGAGVGKT.

The protein belongs to the ATPase alpha/beta chains family. As to quaternary structure, F-type ATPases have 2 components, CF(1) - the catalytic core - and CF(0) - the membrane proton channel. CF(1) has five subunits: alpha(3), beta(3), gamma(1), delta(1), epsilon(1). CF(0) has four main subunits: a(1), b(1), b'(1) and c(9-12).

Its subcellular location is the plastid. The protein localises to the chloroplast thylakoid membrane. The enzyme catalyses ATP + H2O + 4 H(+)(in) = ADP + phosphate + 5 H(+)(out). In terms of biological role, produces ATP from ADP in the presence of a proton gradient across the membrane. The catalytic sites are hosted primarily by the beta subunits. This is ATP synthase subunit beta, chloroplastic from Crucihimalaya wallichii (Rock-cress).